Here is a 23-residue protein sequence, read N- to C-terminus: Phallacidin proprotein 1 (23 aa).

A propeptide is located at residue P1. The segment at residues 2 to 8 (AWLVDCP) is a cross-link (cyclopeptide (Ala-Pro)). Positions 3–7 (WLVDC) form a cross-link, 2'-cysteinyl-6'-hydroxytryptophan sulfoxide (Trp-Cys). Residues 9–23 (CVGDDINRLLTRGEK) constitute a propeptide that is removed on maturation.

The protein belongs to the MSDIN fungal toxin family. Processed by the macrocyclase-peptidase enzyme POPB to yield a toxic cyclic heptapeptide. POPB first removes 10 residues from the N-terminus. Conformational trapping of the remaining peptide forces the enzyme to release this intermediate rather than proceed to macrocyclization. The enzyme rebinds the remaining peptide in a different conformation and catalyzes macrocyclization of the N-terminal 7 residues.

Functionally, major toxin that belongs to the bicyclic heptapeptides called phallotoxins. Although structurally related to amatoxins, phallotoxins have a different mode of action, which is the stabilization of F-actin. Phallotoxins are poisonous when administered parenterally, but not orally because of poor absorption. This is Phallacidin proprotein 1 from Amanita phalloides (Death cap).